Consider the following 114-residue polypeptide: Nucleoid-associated protein PCC7424_2224 (114 aa).

The protein belongs to the YbaB/EbfC family. In terms of assembly, homodimer.

The protein resides in the cytoplasm. It localises to the nucleoid. Functionally, binds to DNA and alters its conformation. May be involved in regulation of gene expression, nucleoid organization and DNA protection. The chain is Nucleoid-associated protein PCC7424_2224 from Gloeothece citriformis (strain PCC 7424) (Cyanothece sp. (strain PCC 7424)).